The sequence spans 273 residues: Dermonecrotic toxin LarSicTox-alphaIB1aii (273 aa).

His5 is an active-site residue. Mg(2+) contacts are provided by Glu25 and Asp27. Residue His41 is the Nucleophile of the active site. 2 disulfides stabilise this stretch: Cys45-Cys51 and Cys47-Cys190. Asp85 serves as a coordination point for Mg(2+). Asn250 carries N-linked (GlcNAc...) asparagine glycosylation.

Belongs to the arthropod phospholipase D family. Class II subfamily. Mg(2+) serves as cofactor. In terms of tissue distribution, expressed by the venom gland.

The protein resides in the secreted. The enzyme catalyses an N-(acyl)-sphingosylphosphocholine = an N-(acyl)-sphingosyl-1,3-cyclic phosphate + choline. The catalysed reaction is an N-(acyl)-sphingosylphosphoethanolamine = an N-(acyl)-sphingosyl-1,3-cyclic phosphate + ethanolamine. It carries out the reaction a 1-acyl-sn-glycero-3-phosphocholine = a 1-acyl-sn-glycero-2,3-cyclic phosphate + choline. It catalyses the reaction a 1-acyl-sn-glycero-3-phosphoethanolamine = a 1-acyl-sn-glycero-2,3-cyclic phosphate + ethanolamine. Dermonecrotic toxins cleave the phosphodiester linkage between the phosphate and headgroup of certain phospholipids (sphingolipid and lysolipid substrates), forming an alcohol (often choline) and a cyclic phosphate. This toxin acts on sphingomyelin (SM). It may also act on ceramide phosphoethanolamine (CPE), lysophosphatidylcholine (LPC) and lysophosphatidylethanolamine (LPE), but not on lysophosphatidylserine (LPS), and lysophosphatidylglycerol (LPG). It acts by transphosphatidylation, releasing exclusively cyclic phosphate products as second products. Induces dermonecrosis, hemolysis, increased vascular permeability, edema, inflammatory response, and platelet aggregation. This is Dermonecrotic toxin LarSicTox-alphaIB1aii from Loxosceles arizonica (Arizona brown spider).